The chain runs to 338 residues: tRNA N6-adenosine threonylcarbamoyltransferase (338 aa).

2 residues coordinate Fe cation: His-111 and His-115. Substrate is bound by residues 134–138, Asp-167, Gly-180, and Asn-272; that span reads LVSGG. Position 300 (Asp-300) interacts with Fe cation.

This sequence belongs to the KAE1 / TsaD family. Requires Fe(2+) as cofactor.

The protein localises to the cytoplasm. The enzyme catalyses L-threonylcarbamoyladenylate + adenosine(37) in tRNA = N(6)-L-threonylcarbamoyladenosine(37) in tRNA + AMP + H(+). Its function is as follows. Required for the formation of a threonylcarbamoyl group on adenosine at position 37 (t(6)A37) in tRNAs that read codons beginning with adenine. Is involved in the transfer of the threonylcarbamoyl moiety of threonylcarbamoyl-AMP (TC-AMP) to the N6 group of A37, together with TsaE and TsaB. TsaD likely plays a direct catalytic role in this reaction. This chain is tRNA N6-adenosine threonylcarbamoyltransferase, found in Vibrio atlanticus (strain LGP32) (Vibrio splendidus (strain Mel32)).